A 156-amino-acid polypeptide reads, in one-letter code: MDITFTIFAQSIAFAALIWIVATKIWPPLIKVIEERQQKIAEGLAAADLGQKELAQAQEEIKKTLKNAREKANEIIEQAHARAHQIIEAAKAEAITETNRQQNLAQVEIEAAAKRAREELRKHVSILAVNGAEKLLKREIDVNTHKMLLDELAAEI.

Residues 3–23 (ITFTIFAQSIAFAALIWIVAT) form a helical membrane-spanning segment.

It belongs to the ATPase B chain family. In terms of assembly, F-type ATPases have 2 components, F(1) - the catalytic core - and F(0) - the membrane proton channel. F(1) has five subunits: alpha(3), beta(3), gamma(1), delta(1), epsilon(1). F(0) has three main subunits: a(1), b(2) and c(10-14). The alpha and beta chains form an alternating ring which encloses part of the gamma chain. F(1) is attached to F(0) by a central stalk formed by the gamma and epsilon chains, while a peripheral stalk is formed by the delta and b chains.

It is found in the cell inner membrane. F(1)F(0) ATP synthase produces ATP from ADP in the presence of a proton or sodium gradient. F-type ATPases consist of two structural domains, F(1) containing the extramembraneous catalytic core and F(0) containing the membrane proton channel, linked together by a central stalk and a peripheral stalk. During catalysis, ATP synthesis in the catalytic domain of F(1) is coupled via a rotary mechanism of the central stalk subunits to proton translocation. In terms of biological role, component of the F(0) channel, it forms part of the peripheral stalk, linking F(1) to F(0). This chain is ATP synthase subunit b, found in Xylella fastidiosa (strain M12).